Here is a 181-residue protein sequence, read N- to C-terminus: Large ribosomal subunit protein uL5 (181 aa).

Belongs to the universal ribosomal protein uL5 family. As to quaternary structure, part of the 50S ribosomal subunit; part of the 5S rRNA/L5/L18/L25 subcomplex. Contacts the 5S rRNA and the P site tRNA. Forms a bridge to the 30S subunit in the 70S ribosome.

In terms of biological role, this is one of the proteins that bind and probably mediate the attachment of the 5S RNA into the large ribosomal subunit, where it forms part of the central protuberance. In the 70S ribosome it contacts protein S13 of the 30S subunit (bridge B1b), connecting the 2 subunits; this bridge is implicated in subunit movement. Contacts the P site tRNA; the 5S rRNA and some of its associated proteins might help stabilize positioning of ribosome-bound tRNAs. This Mesomycoplasma hyopneumoniae (strain 232) (Mycoplasma hyopneumoniae) protein is Large ribosomal subunit protein uL5.